The chain runs to 374 residues: Secondary metabolism regulator laeA (374 aa).

The disordered stretch occupies residues 1–75 (MFEMGPVGTR…NRNGSPSMSP (75 aa)). Positions 23–40 (SYHSPTSSDRGRSRQNSD) are enriched in polar residues. Residue Met207 is modified to S-methylmethionine.

It belongs to the methyltransferase superfamily. LaeA methyltransferase family. As to quaternary structure, component of the heterotrimeric velvet complex composed of laeA, veA and velB; VeA acting as a bridging protein between laeA and velB. Self-methylates at Met-207.

The protein resides in the nucleus. The enzyme catalyses L-methionyl-[protein] + S-adenosyl-L-methionine = S-methyl-L-methionyl-[protein] + S-adenosyl-L-homocysteine. Its function is as follows. Methyltransferase that performs automethylation at Met-207. No other methyl-accepting substrate has been identified yet. Component of the velvet transcription factor complex that acts as a global regulator for secondary metabolite gene expression. Controls the expression of the sterigmatocystin, penicillin, and lovastatin gene clusters. Controls light-dependent formation of the velB-vosA complex, veA protein modification, and is required for light-mediated inhibition of sexual development. Within the velvet complex, controls light-dependent secondary metabolism. Involved in the defense response against Drosophila melanogaster larval grazing. This is Secondary metabolism regulator laeA from Emericella nidulans (Aspergillus nidulans).